The chain runs to 225 residues: MRGLTDGRTPRGTRRTTQAASTAVAVFVALGVSLAGCGTGGTGARDEGPAHADAVGGAGSASPAPAAKASPSKAPDRVDAVRLVKADPKVSPEVKRELKPCVADEYPIDVSYGKVTDGSADDVVVNVLTCGDAVGVGSYVYREEDGAYQNVFKAEEPPVYAEIDRGDLVVTKQVYDKGDPVSSPSGENVITYRWASDRFTEEYRTHNDYSKAAGNAPTPAPEPDS.

Residues 1–36 (MRGLTDGRTPRGTRRTTQAASTAVAVFVALGVSLAG) form the signal peptide. A lipid anchor (N-palmitoyl cysteine) is attached at C37. The S-diacylglycerol cysteine moiety is linked to residue C37. Disordered stretches follow at residues 40–77 (GGTG…APDR) and 205–225 (THND…EPDS). Over residues 60–73 (SASPAPAAKASPSK) the composition is skewed to low complexity.

The protein localises to the cell membrane. May be involved in the stabilization of the cell envelope or may interact with the sensor protein CseC to modulate its activity, in response to cell envelope stress. This Streptomyces coelicolor (strain ATCC BAA-471 / A3(2) / M145) protein is Lipoprotein CseA (cseA).